Here is a 735-residue protein sequence, read N- to C-terminus: Phosphoribosylformylglycinamidine synthase subunit PurL (735 aa).

H48 is an active-site residue. Residues Y51 and K90 each contribute to the ATP site. E92 contacts Mg(2+). Residues 93 to 96 and R115 contribute to the substrate site; that span reads SHNH. H94 (proton acceptor) is an active-site residue. Mg(2+) is bound at residue D116. Position 239 (Q239) interacts with substrate. D267 serves as a coordination point for Mg(2+). Residue 311-313 participates in substrate binding; sequence ESQ. Residues D492 and G529 each contribute to the ATP site. N530 contributes to the Mg(2+) binding site. S532 provides a ligand contact to substrate.

It belongs to the FGAMS family. As to quaternary structure, monomer. Part of the FGAM synthase complex composed of 1 PurL, 1 PurQ and 2 PurS subunits.

It localises to the cytoplasm. It carries out the reaction N(2)-formyl-N(1)-(5-phospho-beta-D-ribosyl)glycinamide + L-glutamine + ATP + H2O = 2-formamido-N(1)-(5-O-phospho-beta-D-ribosyl)acetamidine + L-glutamate + ADP + phosphate + H(+). It participates in purine metabolism; IMP biosynthesis via de novo pathway; 5-amino-1-(5-phospho-D-ribosyl)imidazole from N(2)-formyl-N(1)-(5-phospho-D-ribosyl)glycinamide: step 1/2. In terms of biological role, part of the phosphoribosylformylglycinamidine synthase complex involved in the purines biosynthetic pathway. Catalyzes the ATP-dependent conversion of formylglycinamide ribonucleotide (FGAR) and glutamine to yield formylglycinamidine ribonucleotide (FGAM) and glutamate. The FGAM synthase complex is composed of three subunits. PurQ produces an ammonia molecule by converting glutamine to glutamate. PurL transfers the ammonia molecule to FGAR to form FGAM in an ATP-dependent manner. PurS interacts with PurQ and PurL and is thought to assist in the transfer of the ammonia molecule from PurQ to PurL. The sequence is that of Phosphoribosylformylglycinamidine synthase subunit PurL from Bradyrhizobium sp. (strain BTAi1 / ATCC BAA-1182).